Reading from the N-terminus, the 295-residue chain is Diaminopimelate epimerase (295 aa).

Residues Asn-13, Gln-46, and Asn-66 each coordinate substrate. Cys-75 (proton donor) is an active-site residue. Substrate-binding positions include 76-77 (GN), Asn-162, Asn-195, and 213-214 (ER). Cys-222 (proton acceptor) is an active-site residue. Residue 223–224 (GT) participates in substrate binding.

This sequence belongs to the diaminopimelate epimerase family. As to quaternary structure, homodimer.

Its subcellular location is the cytoplasm. The enzyme catalyses (2S,6S)-2,6-diaminopimelate = meso-2,6-diaminopimelate. The protein operates within amino-acid biosynthesis; L-lysine biosynthesis via DAP pathway; DL-2,6-diaminopimelate from LL-2,6-diaminopimelate: step 1/1. Catalyzes the stereoinversion of LL-2,6-diaminopimelate (L,L-DAP) to meso-diaminopimelate (meso-DAP), a precursor of L-lysine and an essential component of the bacterial peptidoglycan. In Psychrobacter arcticus (strain DSM 17307 / VKM B-2377 / 273-4), this protein is Diaminopimelate epimerase.